Reading from the N-terminus, the 462-residue chain is L-seryl-tRNA(Sec) selenium transferase (462 aa).

Position 293 is an N6-(pyridoxal phosphate)lysine (K293).

This sequence belongs to the SelA family. Pyridoxal 5'-phosphate serves as cofactor.

The protein localises to the cytoplasm. The enzyme catalyses L-seryl-tRNA(Sec) + selenophosphate + H(+) = L-selenocysteinyl-tRNA(Sec) + phosphate. It participates in aminoacyl-tRNA biosynthesis; selenocysteinyl-tRNA(Sec) biosynthesis; selenocysteinyl-tRNA(Sec) from L-seryl-tRNA(Sec) (bacterial route): step 1/1. Its function is as follows. Converts seryl-tRNA(Sec) to selenocysteinyl-tRNA(Sec) required for selenoprotein biosynthesis. The polypeptide is L-seryl-tRNA(Sec) selenium transferase (Clostridium botulinum (strain Langeland / NCTC 10281 / Type F)).